Reading from the N-terminus, the 86-residue chain is Heat shock factor-binding protein (86 aa).

Positions 34–63 (MSDSIITKIDDMGGRINELEQSINDLRAEM) form a coiled coil. Positions 42 to 52 (IDDMGGRINEL) are required for interactions with heat shock factors (HSFs). Residues 59–86 (LRAEMGVEGTPPPASKSGDEPKTPASSS) form a disordered region.

It belongs to the HSBP1 family. Homohexamer. Interacts with HSFA1A, HSFA1B and HSFA2. As to expression, mostly expressed in siliques and flowers, and, to a lower extent, in roots, stems and leaves.

The protein localises to the nucleus. It localises to the cytoplasm. The protein resides in the cytosol. Negative regulator of the heat shock (HS) response. Affects negatively HSFA1B DNA-binding capacity in vitro. Involved in acquired thermotolerance but not basal thermotolerance. Crucial for seed development, after fertilization and during embryogenesis. This is Heat shock factor-binding protein from Arabidopsis thaliana (Mouse-ear cress).